A 74-amino-acid polypeptide reads, in one-letter code: CLAVATA3/ESR (CLE)-related protein 19 (74 aa).

The signal sequence occupies residues 1–24 (MKIKGLMILASSLLILAFIHQSES). Residues Asn34 and Asn54 are each glycosylated (N-linked (GlcNAc...) asparagine). Hydroxyproline occurs at positions 65 and 68. O-linked (Ara...) hydroxyproline glycosylation occurs at Pro68.

Belongs to the CLV3/ESR signal peptide family. The O-glycosylation (arabinosylation) of the hydroxyproline Pro-68 enhances binding affinity of the CLE19p peptide for its receptor. In terms of tissue distribution, mostly expressed in heart-shape embryos, pollen and young flower buds, and, to a lower extent, in inflorescence, leaves and roots.

It localises to the secreted. The protein resides in the extracellular space. Functionally, extracellular signal peptide that regulates cell fate. Represses root apical meristem maintenance. This chain is CLAVATA3/ESR (CLE)-related protein 19, found in Arabidopsis thaliana (Mouse-ear cress).